The following is a 158-amino-acid chain: U4/U6.U5 small nuclear ribonucleoprotein 27 kDa protein (158 aa).

Positions 1–30 (MGRSRSRTPPRRERRRSRSSSRDRERRRRE) are enriched in basic residues. Residues 1–100 (MGRSRSRTPP…ISAEDMQGKT (100 aa)) form a disordered region. A compositionally biased stretch (basic and acidic residues) spans 31 to 41 (RERSRSRDRDR). Residues 42–62 (RRSRSRSPHRRRSRSPRRHRS) show a composition bias toward basic residues. Residues 69 to 86 (RQKDRRDDDRKDVKEKPA) are compositionally biased toward basic and acidic residues.

Belongs to the SNUT3 family. Part of a tri-snRNP complex.

It is found in the nucleus. Functionally, may play a role in mRNA splicing. The polypeptide is U4/U6.U5 small nuclear ribonucleoprotein 27 kDa protein (snrnp27) (Danio rerio (Zebrafish)).